The sequence spans 459 residues: tRNA modification GTPase MnmE (459 aa).

Residues Arg21, Glu84, and Lys123 each contribute to the (6S)-5-formyl-5,6,7,8-tetrahydrofolate site. The TrmE-type G domain occupies 219-380 (GMLTVIVGQP…LEKEIKQRVY (162 aa)). Asn229 is a K(+) binding site. Residues 229–234 (NVGKSS), 248–254 (TDIPGTT), and 273–276 (DTAG) contribute to the GTP site. Ser233 serves as a coordination point for Mg(2+). The K(+) site is built by Thr248, Ile250, and Thr253. A Mg(2+)-binding site is contributed by Thr254. Lys459 is a (6S)-5-formyl-5,6,7,8-tetrahydrofolate binding site.

It belongs to the TRAFAC class TrmE-Era-EngA-EngB-Septin-like GTPase superfamily. TrmE GTPase family. As to quaternary structure, homodimer. Heterotetramer of two MnmE and two MnmG subunits. Requires K(+) as cofactor.

Its subcellular location is the cytoplasm. Functionally, exhibits a very high intrinsic GTPase hydrolysis rate. Involved in the addition of a carboxymethylaminomethyl (cmnm) group at the wobble position (U34) of certain tRNAs, forming tRNA-cmnm(5)s(2)U34. The polypeptide is tRNA modification GTPase MnmE (Desulfitobacterium hafniense (strain Y51)).